Consider the following 62-residue polypeptide: uncharacterized protein (62 aa).

The protein resides in the plastid. Its subcellular location is the chloroplast. This is an uncharacterized protein from Chlamydomonas reinhardtii (Chlamydomonas smithii).